The following is a 286-amino-acid chain: Bifunctional protein FolD (286 aa).

NADP(+)-binding positions include 166–168 (GAS) and I232.

Belongs to the tetrahydrofolate dehydrogenase/cyclohydrolase family. In terms of assembly, homodimer.

The catalysed reaction is (6R)-5,10-methylene-5,6,7,8-tetrahydrofolate + NADP(+) = (6R)-5,10-methenyltetrahydrofolate + NADPH. It catalyses the reaction (6R)-5,10-methenyltetrahydrofolate + H2O = (6R)-10-formyltetrahydrofolate + H(+). It functions in the pathway one-carbon metabolism; tetrahydrofolate interconversion. In terms of biological role, catalyzes the oxidation of 5,10-methylenetetrahydrofolate to 5,10-methenyltetrahydrofolate and then the hydrolysis of 5,10-methenyltetrahydrofolate to 10-formyltetrahydrofolate. This Vibrio parahaemolyticus serotype O3:K6 (strain RIMD 2210633) protein is Bifunctional protein FolD.